The primary structure comprises 110 residues: Protein YcgL (110 aa).

Positions M14–L98 constitute a YcgL domain. Positions P88–R110 are disordered. Positions H97 to R110 are enriched in polar residues.

The protein is Protein YcgL of Salmonella paratyphi A (strain ATCC 9150 / SARB42).